A 524-amino-acid chain; its full sequence is Beta-glucosidase 21 (524 aa).

The signal sequence occupies residues 1–24 (MALQKFPLMGLLLLLTILVSVTTA). A beta-D-glucoside is bound at residue glutamine 55. An N-linked (GlcNAc...) asparagine glycan is attached at asparagine 61. A beta-D-glucoside is bound by residues histidine 158 and 203–204 (NE). Catalysis depends on glutamate 204, which acts as the Proton donor. A disulfide bond links cysteine 223 and cysteine 230. A beta-D-glucoside-binding positions include tyrosine 346, glutamate 418, tryptophan 468, 475-476 (EW), and phenylalanine 484. Glutamate 418 functions as the Nucleophile in the catalytic mechanism. Asparagine 494 carries N-linked (GlcNAc...) asparagine glycosylation. Residues 521-524 (RDEL) carry the Prevents secretion from ER motif.

The protein belongs to the glycosyl hydrolase 1 family. As to quaternary structure, component of the PYK10 complex, at least composed of PYK10/BGLU23, BGLU21, BGLU22, JAL22, JAL23, PBP1/JAL30, PBP2/JAL31, JAL32, JAL33, JAL34, JAL35, GLL22 and GLL23. Expressed exclusively in roots.

The protein resides in the endoplasmic reticulum lumen. It carries out the reaction Hydrolysis of terminal, non-reducing beta-D-glucosyl residues with release of beta-D-glucose.. Its activity is regulated as follows. Activated upon binding to PBP1 or PBP2. In terms of biological role, beta-D-glucosidase active on scopolin &gt;&gt; esculin &gt;&gt; 4-MU-glucoside &gt; DIMBOA-glucoside. No activity with pNP-glucoside, oNP-glucoside and sinigrin as substrates. The sequence is that of Beta-glucosidase 21 from Arabidopsis thaliana (Mouse-ear cress).